Here is a 62-residue protein sequence, read N- to C-terminus: Photosystem II reaction center protein Z (62 aa).

2 helical membrane passes run 8-28 and 41-61; these read AVFA…VVLA and FSGA…NSFI.

This sequence belongs to the PsbZ family. PSII is composed of 1 copy each of membrane proteins PsbA, PsbB, PsbC, PsbD, PsbE, PsbF, PsbH, PsbI, PsbJ, PsbK, PsbL, PsbM, PsbT, PsbY, PsbZ, Psb30/Ycf12, at least 3 peripheral proteins of the oxygen-evolving complex and a large number of cofactors. It forms dimeric complexes.

It is found in the plastid. The protein localises to the chloroplast thylakoid membrane. Its function is as follows. May control the interaction of photosystem II (PSII) cores with the light-harvesting antenna, regulates electron flow through the 2 photosystem reaction centers. PSII is a light-driven water plastoquinone oxidoreductase, using light energy to abstract electrons from H(2)O, generating a proton gradient subsequently used for ATP formation. The chain is Photosystem II reaction center protein Z from Anthoceros angustus (Hornwort).